Consider the following 55-residue polypeptide: ATP synthase F(0) complex subunit 8 (55 aa).

Residues 9–29 traverse the membrane as a helical segment; that stretch reads WFFIMIMSWAVFLLLIQPKLL.

This sequence belongs to the ATPase protein 8 family. In terms of assembly, component of the ATP synthase complex composed at least of ATP5F1A/subunit alpha, ATP5F1B/subunit beta, ATP5MC1/subunit c (homooctomer), MT-ATP6/subunit a, MT-ATP8/subunit 8, ATP5ME/subunit e, ATP5MF/subunit f, ATP5MG/subunit g, ATP5MK/subunit k, ATP5MJ/subunit j, ATP5F1C/subunit gamma, ATP5F1D/subunit delta, ATP5F1E/subunit epsilon, ATP5PF/subunit F6, ATP5PB/subunit b, ATP5PD/subunit d, ATP5PO/subunit OSCP. ATP synthase complex consists of a soluble F(1) head domain (subunits alpha(3) and beta(3)) - the catalytic core - and a membrane F(0) domain - the membrane proton channel (subunits c, a, 8, e, f, g, k and j). These two domains are linked by a central stalk (subunits gamma, delta, and epsilon) rotating inside the F1 region and a stationary peripheral stalk (subunits F6, b, d, and OSCP).

The protein localises to the mitochondrion membrane. Its function is as follows. Subunit 8, of the mitochondrial membrane ATP synthase complex (F(1)F(0) ATP synthase or Complex V) that produces ATP from ADP in the presence of a proton gradient across the membrane which is generated by electron transport complexes of the respiratory chain. ATP synthase complex consist of a soluble F(1) head domain - the catalytic core - and a membrane F(1) domain - the membrane proton channel. These two domains are linked by a central stalk rotating inside the F(1) region and a stationary peripheral stalk. During catalysis, ATP synthesis in the catalytic domain of F(1) is coupled via a rotary mechanism of the central stalk subunits to proton translocation. In vivo, can only synthesize ATP although its ATP hydrolase activity can be activated artificially in vitro. Part of the complex F(0) domain. This chain is ATP synthase F(0) complex subunit 8, found in Rhea americana (Greater rhea).